The chain runs to 440 residues: Xylose isomerase (440 aa).

Catalysis depends on residues His101 and Asp104. 7 residues coordinate Mg(2+): Glu232, Glu268, His271, Asp296, Asp307, Asp309, and Asp339.

This sequence belongs to the xylose isomerase family. In terms of assembly, homotetramer. Mg(2+) serves as cofactor.

It is found in the cytoplasm. The catalysed reaction is alpha-D-xylose = alpha-D-xylulofuranose. The sequence is that of Xylose isomerase from Salmonella dublin (strain CT_02021853).